We begin with the raw amino-acid sequence, 304 residues long: Ribosomal RNA small subunit methyltransferase H (304 aa).

Residues Gly47 to His49, Asp66, Phe93, Asp108, and Gln115 contribute to the S-adenosyl-L-methionine site.

Belongs to the methyltransferase superfamily. RsmH family.

It is found in the cytoplasm. It catalyses the reaction cytidine(1402) in 16S rRNA + S-adenosyl-L-methionine = N(4)-methylcytidine(1402) in 16S rRNA + S-adenosyl-L-homocysteine + H(+). Functionally, specifically methylates the N4 position of cytidine in position 1402 (C1402) of 16S rRNA. In Prochlorococcus marinus (strain NATL2A), this protein is Ribosomal RNA small subunit methyltransferase H.